Here is a 157-residue protein sequence, read N- to C-terminus: UPF0251 protein CLK_0815 (157 aa).

The protein belongs to the UPF0251 family.

The protein is UPF0251 protein CLK_0815 of Clostridium botulinum (strain Loch Maree / Type A3).